Here is a 291-residue protein sequence, read N- to C-terminus: Probable peptide ABC transporter permease protein y4tQ (291 aa).

5 consecutive transmembrane segments (helical) span residues 28-48, 92-112, 137-157, 213-233, and 249-269; these read LVLLGGGILLLLILLALAAPL, LIVGLLSAVCAAVCGLLIGVI, LLAIALLSLTGPGIGILIVAI, ATVCASAIMTEAGLSFIGVGV, and LFLAIAPLTIFAPGLCLAVTV. An ABC transmembrane type-1 domain is found at 88–276; it reads ARISLIVGLL…VTVLAVNLLG (189 aa).

The protein belongs to the binding-protein-dependent transport system permease family. OppBC subfamily.

Its subcellular location is the cell inner membrane. Probably part of the binding-protein-dependent transport system y4tOPQRS for a peptide. Probably responsible for the translocation of the substrate across the membrane. The polypeptide is Probable peptide ABC transporter permease protein y4tQ (Sinorhizobium fredii (strain NBRC 101917 / NGR234)).